The following is a 271-amino-acid chain: Protein FAM110D (271 aa).

3 disordered regions span residues 1 to 83 (MLLA…RPDS), 116 to 145 (PRDAAPSSPASTERPAASGGWAAPQDAPEA), and 186 to 245 (PQSW…PVSV). Residues 68–78 (RPVRRGSGRRL) are compositionally biased toward basic residues. Over residues 116–126 (PRDAAPSSPAS) the composition is skewed to low complexity. The span at 220–231 (SPGGAGGGGGSE) shows a compositional bias: gly residues.

This sequence belongs to the FAM110 family.

This chain is Protein FAM110D (FAM110D), found in Homo sapiens (Human).